Consider the following 341-residue polypeptide: Dual oxidase maturation factor 1 (341 aa).

The Extracellular portion of the chain corresponds to 1-24; the sequence is MAALGHTLPFYTGTKPTFPMDTTL. The chain crosses the membrane as a helical span at residues 25 to 45; sequence AVIITIFLTALVTFIIILPGI. Over 46–51 the chain is Cytoplasmic; sequence RGKTRL. Residues 52–72 form a helical membrane-spanning segment; it reads FWLLRVVTSLFIGAVILAVNF. Over 73-183 the chain is Extracellular; that stretch reads SSEWSVGHVN…RLAGHYASAM (111 aa). N-linked (GlcNAc...) asparagine glycosylation is found at Asn-84, Asn-109, and Asn-121. Residues 184-204 form a helical membrane-spanning segment; it reads LWVAFLCWLLANVMLSMPVLV. Tyr-205 is a topological domain (cytoplasmic). A helical membrane pass occupies residues 206–226; the sequence is GGHMLLATGLFQLLALFFFSM. Over 227-249 the chain is Extracellular; it reads TTSLISPCPLRLGTAVLHTHHGP. Residues 250–270 traverse the membrane as a helical segment; the sequence is AFWITLATGLLCILLGLVMAV. The Cytoplasmic portion of the chain corresponds to 271 to 341; that stretch reads AHRMQPHRLK…EHPKESDCSL (71 aa).

It belongs to the DUOXA family. May interact with NUMB.

Its subcellular location is the membrane. May be required for the maturation and the transport from the endoplasmic reticulum to the plasma membrane of functional DUOX1. In Mus musculus (Mouse), this protein is Dual oxidase maturation factor 1 (Duoxa1).